The chain runs to 215 residues: Ribose-5-phosphate isomerase A (215 aa).

Substrate contacts are provided by residues 26-29, 79-82, and 92-95; these read TGST, DGAD, and KGGG. Residue Glu-101 is the Proton acceptor of the active site. Lys-119 serves as a coordination point for substrate.

This sequence belongs to the ribose 5-phosphate isomerase family. In terms of assembly, homodimer.

It carries out the reaction aldehydo-D-ribose 5-phosphate = D-ribulose 5-phosphate. The protein operates within carbohydrate degradation; pentose phosphate pathway; D-ribose 5-phosphate from D-ribulose 5-phosphate (non-oxidative stage): step 1/1. Its function is as follows. Catalyzes the reversible conversion of ribose-5-phosphate to ribulose 5-phosphate. The sequence is that of Ribose-5-phosphate isomerase A from Xanthomonas oryzae pv. oryzae (strain PXO99A).